Consider the following 150-residue polypeptide: Ribosome maturation factor RimP (150 aa).

The protein belongs to the RimP family.

Its subcellular location is the cytoplasm. In terms of biological role, required for maturation of 30S ribosomal subunits. This chain is Ribosome maturation factor RimP, found in Thermotoga sp. (strain RQ2).